The primary structure comprises 118 residues: Beta-2-microglobulin (118 aa).

The signal sequence occupies residues 1 to 20 (MARVVALVLLGLLSLTGLEA). In terms of domain architecture, Ig-like C1-type spans 22–115 (PRVPKVQVYS…LKDPLIVKWD (94 aa)). A disulfide bridge connects residues Cys45 and Cys99.

Belongs to the beta-2-microglobulin family. Heterodimer of an alpha chain and a beta chain. Beta-2-microglobulin is the beta-chain of major histocompatibility complex class I molecules.

It is found in the secreted. Functionally, component of the class I major histocompatibility complex (MHC). Involved in the presentation of peptide antigens to the immune system. The sequence is that of Beta-2-microglobulin (B2M) from Equus caballus (Horse).